Here is a 249-residue protein sequence, read N- to C-terminus: Segregation and condensation protein A (249 aa).

This sequence belongs to the ScpA family. Component of a cohesin-like complex composed of ScpA, ScpB and the Smc homodimer, in which ScpA and ScpB bind to the head domain of Smc. The presence of the three proteins is required for the association of the complex with DNA.

The protein localises to the cytoplasm. In terms of biological role, participates in chromosomal partition during cell division. May act via the formation of a condensin-like complex containing Smc and ScpB that pull DNA away from mid-cell into both cell halves. The polypeptide is Segregation and condensation protein A (Listeria welshimeri serovar 6b (strain ATCC 35897 / DSM 20650 / CCUG 15529 / CIP 8149 / NCTC 11857 / SLCC 5334 / V8)).